Consider the following 299-residue polypeptide: Pyrroline-5-carboxylate reductase 2 (299 aa).

It belongs to the pyrroline-5-carboxylate reductase family. In terms of assembly, homodecamer; composed of 5 homodimers.

The catalysed reaction is L-proline + NADP(+) = (S)-1-pyrroline-5-carboxylate + NADPH + 2 H(+). It carries out the reaction L-proline + NAD(+) = (S)-1-pyrroline-5-carboxylate + NADH + 2 H(+). Its pathway is amino-acid biosynthesis; L-proline biosynthesis; L-proline from L-glutamate 5-semialdehyde: step 1/1. The chain is Pyrroline-5-carboxylate reductase 2 (pycr2) from Dictyostelium discoideum (Social amoeba).